A 453-amino-acid chain; its full sequence is Probable glycine dehydrogenase (decarboxylating) subunit 1 (453 aa).

Belongs to the GcvP family. N-terminal subunit subfamily. In terms of assembly, the glycine cleavage system is composed of four proteins: P, T, L and H. In this organism, the P 'protein' is a heterodimer of two subunits.

The catalysed reaction is N(6)-[(R)-lipoyl]-L-lysyl-[glycine-cleavage complex H protein] + glycine + H(+) = N(6)-[(R)-S(8)-aminomethyldihydrolipoyl]-L-lysyl-[glycine-cleavage complex H protein] + CO2. The glycine cleavage system catalyzes the degradation of glycine. The P protein binds the alpha-amino group of glycine through its pyridoxal phosphate cofactor; CO(2) is released and the remaining methylamine moiety is then transferred to the lipoamide cofactor of the H protein. This Erythrobacter litoralis (strain HTCC2594) protein is Probable glycine dehydrogenase (decarboxylating) subunit 1.